We begin with the raw amino-acid sequence, 492 residues long: MGCPNCGSTTFESDTASGNTYCTQCGVVVEQDAIVSEVTFGEASTGAAVVQGSLVSNDQTHARTFGGPYRNQGSVESRELTIANGRRRISALAIALKLNERHIEAAVRYFTLAINNNFIKGRRSQYVVASCLYIVCRISKTSHMLIDFSDILQINVFKLGSTFLKLCRVLRPNLPLLDPSLYISRFASLLEFGPETHRVANDAIRLVARMNRDWMQIGRRPAGICGACLLIAARMNNFRRSVREVVHVVKVADITIQKRLDEFKLTESGDLSIADFRNIWLEGQSDPPSFTKNQKFQQYGAQKVSNIDHTQEYMSPIKRTPDFDGNEVKSEELSQTVKVESQETPVHLKADEREIRKEVTETLKGDELRKISLQVNVKFSEEEVTLEDVDDDEIEDILLDKDEILTKTQVWMELNKDYLAEEEAKNLKLQEDLKKGIVRQPRKRRRYRPRDSTSDGIADTAAESAKEMMQQRAFSKKINYEALDMLFDEEQS.

The TFIIB-type zinc-finger motif lies at 1–30 (MGCPNCGSTTFESDTASGNTYCTQCGVVVE). Zn(2+) contacts are provided by Cys3, Cys6, Cys22, and Cys25. The segment at 440–468 (QPRKRRRYRPRDSTSDGIADTAAESAKEM) is disordered.

The protein belongs to the TFIIB family. TFIIIB comprises the TATA-binding protein (TBP), the B-related factor (BRF) and a third subunit (Potential). Interacts with maf1.

The protein resides in the nucleus. General activator of RNA polymerase III transcription. The protein is Transcription factor IIIB 60 kDa subunit (brf1) of Schizosaccharomyces pombe (strain 972 / ATCC 24843) (Fission yeast).